The chain runs to 148 residues: UPF0756 membrane protein NMC1845 (148 aa).

4 helical membrane passes run 13 to 35 (LILLGVVSNNNSITISATILLLM), 50 to 70 (HGLNLGIILLTIGVLSPLVSG), 80 to 100 (FLNFKMISAVFIGIFVAWLAG), and 121 to 141 (VIGVAFMGGIPVGPLIAAGIL).

This sequence belongs to the UPF0756 family.

The protein localises to the cell membrane. The protein is UPF0756 membrane protein NMC1845 of Neisseria meningitidis serogroup C / serotype 2a (strain ATCC 700532 / DSM 15464 / FAM18).